The following is a 445-amino-acid chain: UDP-N-acetylmuramoylalanine--D-glutamate ligase (445 aa).

Position 117–123 (glycine 117–threonine 123) interacts with ATP.

The protein belongs to the MurCDEF family.

The protein resides in the cytoplasm. The enzyme catalyses UDP-N-acetyl-alpha-D-muramoyl-L-alanine + D-glutamate + ATP = UDP-N-acetyl-alpha-D-muramoyl-L-alanyl-D-glutamate + ADP + phosphate + H(+). Its pathway is cell wall biogenesis; peptidoglycan biosynthesis. In terms of biological role, cell wall formation. Catalyzes the addition of glutamate to the nucleotide precursor UDP-N-acetylmuramoyl-L-alanine (UMA). The protein is UDP-N-acetylmuramoylalanine--D-glutamate ligase of Neisseria gonorrhoeae (strain NCCP11945).